Reading from the N-terminus, the 602-residue chain is MDSRVSGTTSNGETKPVCPGLEKAAEDGALQREQWSNKMEFLLSVAGEIIGLGNVWRFPYLCYKNGGGAFFIPYLIFLFTCGIPVFLLETALGQYTSQGGITAWRKICPIFEGIGYASQMIVTLLNIYYIIVLAWALFYLFSSFTIDLPWGSCRHDWNTERCVEFQRTNGSLNATAENATSPVIEFWERRVLKISEGIQHLGALRWELALCLLLAWVVCYFCIWKGVKSTGKVVYFTATFPYLMLVVLLIRGVTLPGAAQGIQFYLYPNLTRLWDPQVWMDAGTQIFFSFAICLGCLTALGSYNKYHNNCYRDSIALCFLNSGTSFVAGFAIFSILGFMSQEQGVPISEVAESGPGLAFIAYPRAVVMLPFSPLWACCFFFMVVLLGLDSQFVCVESLVTALVDMYPRVFRKKNRREVLILGVSVTSFLVGLVMLTEGGMYVFQLFDYYAASGMCLLFVAIFESFCVAWAYGAGRFYDNIEDMIGYRPWPLIKYCWLFLTPAVCTATFLFSLIKYTPLTYNKKYKYPWWGDALGWLLALSSMVCIPAWSCYKLSTLKGSFRERVRQLLCPAKDLPQGHREGPSAPATPRTSLLILTELEPHH.

The Cytoplasmic portion of the chain corresponds to 1–40 (MDSRVSGTTSNGETKPVCPGLEKAAEDGALQREQWSNKME). 3 helical membrane-spanning segments follow: residues 41–61 (FLLS…FPYL), 68–88 (GAFF…VFLL), and 121–141 (IVTL…FYLF). Residues 142–206 (SSFTIDLPWG…GIQHLGALRW (65 aa)) lie on the Extracellular side of the membrane. The cysteines at positions 153 and 162 are disulfide-linked. N-linked (GlcNAc...) asparagine glycans are attached at residues Asn-169 and Asn-173. Helical transmembrane passes span 207–227 (ELAL…WKGV) and 233–253 (VVYF…IRGV). A glycan (N-linked (GlcNAc...) asparagine) is linked at Asn-269. Helical transmembrane passes span 282 to 302 (AGTQ…ALGS), 319 to 339 (FLNS…LGFM), 366 to 386 (VVML…VVLL), 418 to 438 (VLIL…LTEG), 453 to 473 (GMCL…AYGA), 490 to 510 (PLIK…TFLF), and 528 to 548 (WWGD…IPAW). Residues 549–602 (SCYKLSTLKGSFRERVRQLLCPAKDLPQGHREGPSAPATPRTSLLILTELEPHH) are Cytoplasmic-facing. Thr-587 carries the post-translational modification Phosphothreonine. Ser-591 is modified (phosphoserine).

The protein belongs to the sodium:neurotransmitter symporter (SNF) (TC 2.A.22) family. SLC6A13 subfamily.

The protein resides in the cell membrane. It is found in the basolateral cell membrane. The enzyme catalyses 4-aminobutanoate(out) + chloride(out) + 2 Na(+)(out) = 4-aminobutanoate(in) + chloride(in) + 2 Na(+)(in). It catalyses the reaction taurine(out) + chloride(out) + 2 Na(+)(out) = taurine(in) + chloride(in) + 2 Na(+)(in). The catalysed reaction is beta-alanine(out) + chloride(out) + 2 Na(+)(out) = beta-alanine(in) + chloride(in) + 2 Na(+)(in). It carries out the reaction hypotaurine(out) + chloride(out) + 2 Na(+)(out) = hypotaurine(in) + chloride(in) + 2 Na(+)(in). Functionally, mediates sodium- and chloride-dependent transport of gamma-aminobutyric acid (GABA). Can also mediate transport of beta-alanine, taurine and hypotaurine. The polypeptide is Sodium- and chloride-dependent GABA transporter 2 (SLC6A13) (Bos taurus (Bovine)).